Reading from the N-terminus, the 469-residue chain is 3-isopropylmalate dehydratase large subunit (469 aa).

Residues C350, C410, and C413 each contribute to the [4Fe-4S] cluster site.

Belongs to the aconitase/IPM isomerase family. LeuC type 1 subfamily. Heterodimer of LeuC and LeuD. [4Fe-4S] cluster serves as cofactor.

It catalyses the reaction (2R,3S)-3-isopropylmalate = (2S)-2-isopropylmalate. Its pathway is amino-acid biosynthesis; L-leucine biosynthesis; L-leucine from 3-methyl-2-oxobutanoate: step 2/4. Functionally, catalyzes the isomerization between 2-isopropylmalate and 3-isopropylmalate, via the formation of 2-isopropylmaleate. The chain is 3-isopropylmalate dehydratase large subunit from Rhodopseudomonas palustris (strain TIE-1).